The chain runs to 571 residues: Sulfite reductase [NADPH] hemoprotein beta-component (571 aa).

[4Fe-4S] cluster-binding residues include C435, C441, C480, and C484. Position 484 (C484) interacts with siroheme.

This sequence belongs to the nitrite and sulfite reductase 4Fe-4S domain family. Alpha(8)-beta(8). The alpha component is a flavoprotein, the beta component is a hemoprotein. Requires siroheme as cofactor. The cofactor is [4Fe-4S] cluster.

It catalyses the reaction hydrogen sulfide + 3 NADP(+) + 3 H2O = sulfite + 3 NADPH + 4 H(+). It participates in sulfur metabolism; hydrogen sulfide biosynthesis; hydrogen sulfide from sulfite (NADPH route): step 1/1. In terms of biological role, component of the sulfite reductase complex that catalyzes the 6-electron reduction of sulfite to sulfide. This is one of several activities required for the biosynthesis of L-cysteine from sulfate. The polypeptide is Sulfite reductase [NADPH] hemoprotein beta-component (Serratia proteamaculans (strain 568)).